The sequence spans 335 residues: Glyceraldehyde-3-phosphate dehydrogenase (335 aa).

Residues 10 to 11 (RI), aspartate 33, arginine 77, and serine 119 each bind NAD(+). D-glyceraldehyde 3-phosphate contacts are provided by residues 150 to 152 (SCT), threonine 181, 210 to 211 (TG), and arginine 233. Cysteine 151 (nucleophile) is an active-site residue. Residue asparagine 315 coordinates NAD(+).

The protein belongs to the glyceraldehyde-3-phosphate dehydrogenase family. In terms of assembly, homotetramer.

The protein resides in the cytoplasm. It catalyses the reaction D-glyceraldehyde 3-phosphate + phosphate + NAD(+) = (2R)-3-phospho-glyceroyl phosphate + NADH + H(+). The protein operates within carbohydrate degradation; glycolysis; pyruvate from D-glyceraldehyde 3-phosphate: step 1/5. In terms of biological role, catalyzes the oxidative phosphorylation of glyceraldehyde 3-phosphate (G3P) to 1,3-bisphosphoglycerate (BPG) using the cofactor NAD. The first reaction step involves the formation of a hemiacetal intermediate between G3P and a cysteine residue, and this hemiacetal intermediate is then oxidized to a thioester, with concomitant reduction of NAD to NADH. The reduced NADH is then exchanged with the second NAD, and the thioester is attacked by a nucleophilic inorganic phosphate to produce BPG. The sequence is that of Glyceraldehyde-3-phosphate dehydrogenase (gap) from Chlamydia pneumoniae (Chlamydophila pneumoniae).